Consider the following 529-residue polypeptide: CTP synthase (529 aa).

An amidoligase domain region spans residues 1 to 270 (MKYIVVTGGV…ADVVCSYLSL (270 aa)). CTP is bound at residue Ser12. UTP is bound at residue Ser12. Residues 13–18 (GLGKGI) and Asp70 contribute to the ATP site. Mg(2+)-binding residues include Asp70 and Glu145. CTP is bound by residues 152–154 (DIE), 191–196 (KTKPTQ), and Lys227. Residues 191 to 196 (KTKPTQ) and Lys227 contribute to the UTP site. ATP is bound at residue 243 to 245 (KDA). Residues 293-525 (VAIVSKYGIE…VEACKKNKSS (233 aa)) enclose the Glutamine amidotransferase type-1 domain. Gly349 lines the L-glutamine pocket. Cys376 (nucleophile; for glutamine hydrolysis) is an active-site residue. Residues 377–380 (LGFQ), Glu400, and Arg455 contribute to the L-glutamine site. Residues His498 and Glu500 contribute to the active site.

It belongs to the CTP synthase family. In terms of assembly, homotetramer.

The enzyme catalyses UTP + L-glutamine + ATP + H2O = CTP + L-glutamate + ADP + phosphate + 2 H(+). It catalyses the reaction L-glutamine + H2O = L-glutamate + NH4(+). The catalysed reaction is UTP + NH4(+) + ATP = CTP + ADP + phosphate + 2 H(+). It participates in pyrimidine metabolism; CTP biosynthesis via de novo pathway; CTP from UDP: step 2/2. Its activity is regulated as follows. Allosterically activated by GTP, when glutamine is the substrate; GTP has no effect on the reaction when ammonia is the substrate. The allosteric effector GTP functions by stabilizing the protein conformation that binds the tetrahedral intermediate(s) formed during glutamine hydrolysis. Inhibited by the product CTP, via allosteric rather than competitive inhibition. In terms of biological role, catalyzes the ATP-dependent amination of UTP to CTP with either L-glutamine or ammonia as the source of nitrogen. Regulates intracellular CTP levels through interactions with the four ribonucleotide triphosphates. The polypeptide is CTP synthase (Methanoculleus marisnigri (strain ATCC 35101 / DSM 1498 / JR1)).